A 296-amino-acid polypeptide reads, in one-letter code: Phosphatidylserine decarboxylase proenzyme (296 aa).

Residues aspartate 113, histidine 169, and serine 256 each act as charge relay system; for autoendoproteolytic cleavage activity in the active site. Serine 256 acts as the Schiff-base intermediate with substrate; via pyruvic acid; for decarboxylase activity in catalysis. Position 256 is a pyruvic acid (Ser); by autocatalysis (serine 256).

This sequence belongs to the phosphatidylserine decarboxylase family. PSD-B subfamily. Prokaryotic type II sub-subfamily. In terms of assembly, heterodimer of a large membrane-associated beta subunit and a small pyruvoyl-containing alpha subunit. It depends on pyruvate as a cofactor. Is synthesized initially as an inactive proenzyme. Formation of the active enzyme involves a self-maturation process in which the active site pyruvoyl group is generated from an internal serine residue via an autocatalytic post-translational modification. Two non-identical subunits are generated from the proenzyme in this reaction, and the pyruvate is formed at the N-terminus of the alpha chain, which is derived from the carboxyl end of the proenzyme. The autoendoproteolytic cleavage occurs by a canonical serine protease mechanism, in which the side chain hydroxyl group of the serine supplies its oxygen atom to form the C-terminus of the beta chain, while the remainder of the serine residue undergoes an oxidative deamination to produce ammonia and the pyruvoyl prosthetic group on the alpha chain. During this reaction, the Ser that is part of the protease active site of the proenzyme becomes the pyruvoyl prosthetic group, which constitutes an essential element of the active site of the mature decarboxylase.

The protein resides in the cell membrane. The enzyme catalyses a 1,2-diacyl-sn-glycero-3-phospho-L-serine + H(+) = a 1,2-diacyl-sn-glycero-3-phosphoethanolamine + CO2. The protein operates within phospholipid metabolism; phosphatidylethanolamine biosynthesis; phosphatidylethanolamine from CDP-diacylglycerol: step 2/2. Its function is as follows. Catalyzes the formation of phosphatidylethanolamine (PtdEtn) from phosphatidylserine (PtdSer). This chain is Phosphatidylserine decarboxylase proenzyme, found in Clostridium botulinum (strain Eklund 17B / Type B).